A 167-amino-acid polypeptide reads, in one-letter code: C-X-C motif chemokine 15 (167 aa).

An N-terminal signal peptide occupies residues 1–25; that stretch reads MAAQGWSMLLLAVLNLGIFVRPCDT. 2 disulfides stabilise this stretch: C30-C57 and C32-C73. Phosphoserine is present on S157.

The protein belongs to the intercrine alpha (chemokine CxC) family. Expression restricted to the lung, produced by bronchoepithelial cells and is released into the airways. Expressed at low levels in fetal lung.

It localises to the secreted. Functionally, chemotactic for neutrophils. Involved in lung-specific neutrophil trafficking during normal and inflammatory conditions. In Mus musculus (Mouse), this protein is C-X-C motif chemokine 15 (Cxcl15).